A 369-amino-acid polypeptide reads, in one-letter code: 2-aminoethylphosphonate--pyruvate transaminase (369 aa).

Position 193 is an N6-(pyridoxal phosphate)lysine (Lys-193).

This sequence belongs to the class-V pyridoxal-phosphate-dependent aminotransferase family. PhnW subfamily. In terms of assembly, homodimer. Pyridoxal 5'-phosphate is required as a cofactor.

It catalyses the reaction (2-aminoethyl)phosphonate + pyruvate = phosphonoacetaldehyde + L-alanine. Functionally, involved in phosphonate degradation. This Pseudomonas fluorescens (strain Pf0-1) protein is 2-aminoethylphosphonate--pyruvate transaminase.